Consider the following 293-residue polypeptide: Shikimate dehydrogenase (NADP(+)) (293 aa).

Shikimate-binding positions include 26–28 (SKS) and Thr73. Catalysis depends on Lys77, which acts as the Proton acceptor. Glu89 contacts NADP(+). Residues Asn98 and Asp113 each coordinate shikimate. NADP(+) contacts are provided by residues 137–141 (GAGGA), 161–166 (NRTRQR), and Ile231. Tyr233 contributes to the shikimate binding site. Residue Gly254 participates in NADP(+) binding.

It belongs to the shikimate dehydrogenase family. Homodimer.

The enzyme catalyses shikimate + NADP(+) = 3-dehydroshikimate + NADPH + H(+). Its pathway is metabolic intermediate biosynthesis; chorismate biosynthesis; chorismate from D-erythrose 4-phosphate and phosphoenolpyruvate: step 4/7. Its function is as follows. Involved in the biosynthesis of the chorismate, which leads to the biosynthesis of aromatic amino acids. Catalyzes the reversible NADPH linked reduction of 3-dehydroshikimate (DHSA) to yield shikimate (SA). This is Shikimate dehydrogenase (NADP(+)) from Bartonella quintana (strain Toulouse) (Rochalimaea quintana).